A 976-amino-acid chain; its full sequence is Ephrin type-A receptor 2 (976 aa).

The first 23 residues, 1–23, serve as a signal peptide directing secretion; sequence MELWAARACFVLLWGCALAPATA. A mediates interaction with CLDN4 region spans residues 1 to 206; that stretch reads MELWAARACF…YYKKCPELLQ (206 aa). The Extracellular portion of the chain corresponds to 25 to 537; that stretch reads QGKEVVLLDF…SPEGSGSLAV (513 aa). One can recognise an Eph LBD domain in the interval 28–206; sequence EVVLLDFAAA…YYKKCPELLQ (179 aa). 2 disulfide bridges follow: cysteine 70-cysteine 188 and cysteine 105-cysteine 115. The Fibronectin type-III 1 domain occupies 328–432; sequence PPSAPHYLTA…TSRSFRTASV (105 aa). N-linked (GlcNAc...) asparagine glycans are attached at residues asparagine 407 and asparagine 435. The region spanning 438–529 is the Fibronectin type-III 2 domain; the sequence is EPPKVRLEGR…KVHEFQTLSP (92 aa). A helical transmembrane segment spans residues 538 to 558; the sequence is IGGVAVCVVLLLLLAGAGFFI. Over 559 to 976 the chain is Cytoplasmic; sequence HRRRKNLRAR…DQVNTVGIPI (418 aa). Serine 570 carries the phosphoserine modification. Tyrosine 575 is modified (phosphotyrosine). Serine 579 carries the phosphoserine modification. At tyrosine 588 the chain carries Phosphotyrosine; by autocatalysis. A Phosphotyrosine modification is found at tyrosine 594. The interval 606–906 is mediates interaction with ARHGEF16; the sequence is TEIHPSCVTR…STSGSEGVPF (301 aa). One can recognise a Protein kinase domain in the interval 613 to 875; it reads VTRQKVIGAG…DIVSILDKLI (263 aa). Residue 619-627 participates in ATP binding; that stretch reads IGAGEFGEV. Position 628 is a phosphotyrosine (tyrosine 628). Residue lysine 646 coordinates ATP. Threonine 647 is subject to Phosphothreonine. Position 735 is a phosphotyrosine; by autocatalysis (tyrosine 735). Catalysis depends on aspartate 739, which acts as the Proton acceptor. Tyrosine 772 carries the phosphotyrosine modification. A phosphoserine mark is found at serine 869, serine 892, serine 897, and serine 901. The tract at residues 886–976 is negatively regulates interaction with ARHGEF16; that stretch reads DFDPRVSIRL…DQVNTVGIPI (91 aa). Residues 904-968 form the SAM domain; the sequence is VPFRTVSEWL…AYSLLGLKDQ (65 aa). Tyrosine 921 carries the post-translational modification Phosphotyrosine; by autocatalysis. Residue tyrosine 930 is modified to Phosphotyrosine. The PDZ-binding signature appears at 974 to 976; it reads IPI.

This sequence belongs to the protein kinase superfamily. Tyr protein kinase family. Ephrin receptor subfamily. In terms of assembly, homodimer. Interacts with SLA. Interacts (phosphorylated form) with VAV2, VAV3 and PI3-kinase p85 subunit (PIK3R1, PIK3R2 or PIK3R3); critical for the EFNA1-induced activation of RAC1 which stimulates cell migration. Interacts with INPPL1; regulates activated EPHA2 endocytosis and degradation. Interacts (inactivated form) with PTK2/FAK1 and interacts (EFNA1 ligand-activated form) with PTPN11; regulates integrin-mediated adhesion. Interacts with ARHGEF16, DOCK4 and ELMO2; mediates ligand-independent activation of RAC1 which stimulates cell migration. Interacts with CLDN4; phosphorylates CLDN4 and may regulate tight junctions. Interacts with ACP1. Interacts with ANKS1A. Interacts with CEMIP. Interacts with NCK1; may regulate EPHA2 activity in cell migration and adhesion. Interacts with TIMD4. Autophosphorylates. Phosphorylated on tyrosine upon binding and activation by EFNA1. Phosphorylated residues Tyr-588 and Tyr-594 are required for binding VAV2 and VAV3 while phosphorylated residues Tyr-735 and Tyr-930 are required for binding PI3-kinase p85 subunit (PIK3R1, PIK3R2 or PIK3R3). These phosphorylated residues are critical for recruitment of VAV2 and VAV3 and PI3-kinase p85 subunit which transduce downstream signaling to activate RAC1 GTPase and cell migration. Dephosphorylation of Tyr-930 by PTPRF prevents the interaction of EPHA2 with NCK1. Phosphorylated at Ser-897 by PKB; serum-induced phosphorylation which targets EPHA2 to the cell leading edge and stimulates cell migration. Phosphorylation by PKB is inhibited by EFNA1-activated EPHA2 which regulates PKB activity via a reciprocal regulatory loop. Phosphorylated at Ser-897 in response to TNF by RPS6KA1 and RPS6KA3; RPS6KA-EPHA2 signaling pathway controls cell migration. Phosphorylated at Ser-897 by PKA; blocks cell retraction induced by EPHA2 kinase activity. Dephosphorylated by ACP1. In terms of processing, ubiquitinated by CHIP/STUB1. Ubiquitination is regulated by the HSP90 chaperone and regulates the receptor stability and activity through proteasomal degradation. ANKS1A prevents ubiquitination and degradation.

Its subcellular location is the cell membrane. It is found in the cell projection. The protein localises to the ruffle membrane. It localises to the lamellipodium membrane. The protein resides in the cell junction. Its subcellular location is the focal adhesion. It catalyses the reaction L-tyrosyl-[protein] + ATP = O-phospho-L-tyrosyl-[protein] + ADP + H(+). In terms of biological role, receptor tyrosine kinase which binds promiscuously membrane-bound ephrin-A family ligands residing on adjacent cells, leading to contact-dependent bidirectional signaling into neighboring cells. The signaling pathway downstream of the receptor is referred to as forward signaling while the signaling pathway downstream of the ephrin ligand is referred to as reverse signaling. Activated by the ligand ephrin-A1/EFNA1 regulates migration, integrin-mediated adhesion, proliferation and differentiation of cells. Regulates cell adhesion and differentiation through DSG1/desmoglein-1 and inhibition of the ERK1/ERK2 signaling pathway. May also participate in UV radiation-induced apoptosis and have a ligand-independent stimulatory effect on chemotactic cell migration. During development, may function in distinctive aspects of pattern formation and subsequently in development of several fetal tissues. Involved for instance in angiogenesis, in early hindbrain development and epithelial proliferation and branching morphogenesis during mammary gland development. Engaged by the ligand ephrin-A5/EFNA5 may regulate lens fiber cells shape and interactions and be important for lens transparency development and maintenance. With ephrin-A2/EFNA2 may play a role in bone remodeling through regulation of osteoclastogenesis and osteoblastogenesis. The polypeptide is Ephrin type-A receptor 2 (EPHA2) (Macaca fascicularis (Crab-eating macaque)).